The sequence spans 550 residues: Probable terpene synthase 2 (550 aa).

The Mg(2+) site is built by D305, D309, and E457. Residues 305–309 carry the DDXXD motif motif; sequence DDIYD.

It belongs to the terpene synthase family. Requires Mg(2+) as cofactor.

Probable sesquiterpene synthase. The protein is Probable terpene synthase 2 (TPS2) of Ricinus communis (Castor bean).